Reading from the N-terminus, the 453-residue chain is Adenylyltransferase and sulfurtransferase MOCS3 (453 aa).

The residue at position 62 (Thr-62) is a Phosphothreonine. Residues Gly-101, Asp-122, 129-133, Lys-146, and 190-191 each bind ATP; these read SNFHR and DN. 2 residues coordinate Zn(2+): Cys-231 and Cys-234. Cys-248 (glycyl thioester intermediate; for adenylyltransferase activity) is an active-site residue. Zn(2+)-binding residues include Cys-306 and Cys-309. In terms of domain architecture, Rhodanese spans 355 to 451; sequence QAQPHLLIDV…WTNSVDPSFP (97 aa). Cys-410 serves as the catalytic Cysteine persulfide intermediate; for sulfurtransferase activity.

It in the N-terminal section; belongs to the HesA/MoeB/ThiF family. UBA4 subfamily. Requires Zn(2+) as cofactor.

The protein resides in the cytoplasm. It localises to the cytosol. It catalyses the reaction [molybdopterin-synthase sulfur-carrier protein]-C-terminal Gly-Gly + ATP + H(+) = [molybdopterin-synthase sulfur-carrier protein]-C-terminal Gly-Gly-AMP + diphosphate. It carries out the reaction [molybdopterin-synthase sulfur-carrier protein]-C-terminal Gly-Gly-AMP + S-sulfanyl-L-cysteinyl-[cysteine desulfurase] + AH2 = [molybdopterin-synthase sulfur-carrier protein]-C-terminal-Gly-aminoethanethioate + L-cysteinyl-[cysteine desulfurase] + A + AMP + 2 H(+). Its pathway is tRNA modification; 5-methoxycarbonylmethyl-2-thiouridine-tRNA biosynthesis. It functions in the pathway cofactor biosynthesis; molybdopterin biosynthesis. Its function is as follows. Plays a central role in 2-thiolation of mcm(5)S(2)U at tRNA wobble positions of cytosolic tRNA(Lys), tRNA(Glu) and tRNA(Gln). Also essential during biosynthesis of the molybdenum cofactor. Acts by mediating the C-terminal thiocarboxylation of sulfur carriers URM1 and MOCS2A. Its N-terminus first activates URM1 and MOCS2A as acyl-adenylates (-COAMP), then the persulfide sulfur on the catalytic cysteine is transferred to URM1 and MOCS2A to form thiocarboxylation (-COSH) of their C-terminus. The reaction probably involves hydrogen sulfide that is generated from the persulfide intermediate and that acts as a nucleophile towards URM1 and MOCS2A. Subsequently, a transient disulfide bond is formed. Does not use thiosulfate as sulfur donor; NFS1 probably acting as a sulfur donor for thiocarboxylation reactions. The protein is Adenylyltransferase and sulfurtransferase MOCS3 of Drosophila yakuba (Fruit fly).